Reading from the N-terminus, the 330-residue chain is Carbonic anhydrase (330 aa).

The tract at residues 1 to 109 (MSAASAFAMN…AATRIDQITA (109 aa)) is chloroplast transit peptide-like.

The protein belongs to the beta-class carbonic anhydrase family.

It is found in the cytoplasm. The enzyme catalyses hydrogencarbonate + H(+) = CO2 + H2O. Reversible hydration of carbon dioxide. The protein is Carbonic anhydrase of Flaveria bidentis (Coastal plain yellowtops).